We begin with the raw amino-acid sequence, 813 residues long: Protein PPP4R3C1 (813 aa).

The disordered stretch occupies residues 730–813; sequence NESESAIEGQ…PPPKRPNLST (84 aa). Acidic residues predominate over residues 777-788; it reads YDTDDENDDDPY.

It belongs to the SMEK family.

The polypeptide is Protein PPP4R3C1 (Mus musculus (Mouse)).